Reading from the N-terminus, the 343-residue chain is Uroporphyrinogen decarboxylase (343 aa).

Substrate is bound by residues 25-29 (RQAGR), aspartate 75, tyrosine 152, serine 207, and histidine 323.

The protein belongs to the uroporphyrinogen decarboxylase family. In terms of assembly, homodimer.

Its subcellular location is the cytoplasm. The catalysed reaction is uroporphyrinogen III + 4 H(+) = coproporphyrinogen III + 4 CO2. It functions in the pathway porphyrin-containing compound metabolism; protoporphyrin-IX biosynthesis; coproporphyrinogen-III from 5-aminolevulinate: step 4/4. In terms of biological role, catalyzes the decarboxylation of four acetate groups of uroporphyrinogen-III to yield coproporphyrinogen-III. This chain is Uroporphyrinogen decarboxylase, found in Jannaschia sp. (strain CCS1).